The primary structure comprises 729 residues: NAD(P)H-quinone oxidoreductase subunit 5, chloroplastic (729 aa).

The next 18 helical transmembrane spans lie at 9–29 (WIIP…SFFF), 39–59 (LCAL…LAIF), 87–107 (FLVD…GVLV), 125–145 (YAYL…PNLI), 147–167 (LYVF…FWFA), 184–204 (IGDF…GSFE), 218–238 (IGFS…AGPV), 258–278 (TPIS…FFIA), 289–311 (LVMQ…LALA), 327–347 (LGYM…FHLV), 354–374 (ALLF…VGYS), 395–415 (GTTF…ACFW), 425–445 (WLSS…TAFY), 540–560 (FSLV…INLI), 592–612 (ILLN…FSFI), 627–646 (LVGF…SWSL), 676–696 (YGID…GEFI), and 708–728 (LFII…FLPF).

The protein belongs to the complex I subunit 5 family. NDH is composed of at least 16 different subunits, 5 of which are encoded in the nucleus.

The protein localises to the plastid. It is found in the chloroplast thylakoid membrane. It carries out the reaction a plastoquinone + NADH + (n+1) H(+)(in) = a plastoquinol + NAD(+) + n H(+)(out). It catalyses the reaction a plastoquinone + NADPH + (n+1) H(+)(in) = a plastoquinol + NADP(+) + n H(+)(out). NDH shuttles electrons from NAD(P)H:plastoquinone, via FMN and iron-sulfur (Fe-S) centers, to quinones in the photosynthetic chain and possibly in a chloroplast respiratory chain. The immediate electron acceptor for the enzyme in this species is believed to be plastoquinone. Couples the redox reaction to proton translocation, and thus conserves the redox energy in a proton gradient. This Adiantum capillus-veneris (Maidenhair fern) protein is NAD(P)H-quinone oxidoreductase subunit 5, chloroplastic (ndhF).